Consider the following 400-residue polypeptide: Chorismate synthase (400 aa).

Residues Arg40 and Arg46 each coordinate NADP(+). FMN is bound by residues 135-137 (RAS), 257-258 (QA), Gly301, 316-320 (KPIST), and Arg342.

Belongs to the chorismate synthase family. In terms of assembly, homotetramer. The cofactor is FMNH2.

It catalyses the reaction 5-O-(1-carboxyvinyl)-3-phosphoshikimate = chorismate + phosphate. It participates in metabolic intermediate biosynthesis; chorismate biosynthesis; chorismate from D-erythrose 4-phosphate and phosphoenolpyruvate: step 7/7. Functionally, catalyzes the anti-1,4-elimination of the C-3 phosphate and the C-6 proR hydrogen from 5-enolpyruvylshikimate-3-phosphate (EPSP) to yield chorismate, which is the branch point compound that serves as the starting substrate for the three terminal pathways of aromatic amino acid biosynthesis. This reaction introduces a second double bond into the aromatic ring system. The sequence is that of Chorismate synthase from Tropheryma whipplei (strain TW08/27) (Whipple's bacillus).